A 290-amino-acid polypeptide reads, in one-letter code: Small ribosomal subunit protein uS2 (290 aa).

Residues 269 to 290 (WEAEASGDWAAESAQPNPETKW) are disordered.

This sequence belongs to the universal ribosomal protein uS2 family. As to quaternary structure, component of the small ribosomal subunit. Mature ribosomes consist of a small (40S) and a large (60S) subunit. The 40S subunit contains about 33 different proteins and 1 molecule of RNA (18S). The 60S subunit contains about 49 different proteins and 3 molecules of RNA (25S, 5.8S and 5S). Interacts with rps21.

It localises to the cytoplasm. In terms of biological role, required for the assembly and/or stability of the 40S ribosomal subunit. Required for the processing of the 20S rRNA-precursor to mature 18S rRNA in a late step of the maturation of 40S ribosomal subunits. The polypeptide is Small ribosomal subunit protein uS2 (rps0) (Talaromyces marneffei (strain ATCC 18224 / CBS 334.59 / QM 7333) (Penicillium marneffei)).